The sequence spans 378 residues: Putative glutamate--cysteine ligase 2 (378 aa).

It belongs to the glutamate--cysteine ligase type 2 family. YbdK subfamily.

It carries out the reaction L-cysteine + L-glutamate + ATP = gamma-L-glutamyl-L-cysteine + ADP + phosphate + H(+). In terms of biological role, ATP-dependent carboxylate-amine ligase which exhibits weak glutamate--cysteine ligase activity. This Pseudomonas paraeruginosa (strain DSM 24068 / PA7) (Pseudomonas aeruginosa (strain PA7)) protein is Putative glutamate--cysteine ligase 2.